The chain runs to 193 residues: Peptidyl-tRNA hydrolase (193 aa).

Tyr15 contacts tRNA. Catalysis depends on His20, which acts as the Proton acceptor. TRNA is bound by residues Phe65, Asn67, and Asn113.

It belongs to the PTH family. In terms of assembly, monomer.

It localises to the cytoplasm. It carries out the reaction an N-acyl-L-alpha-aminoacyl-tRNA + H2O = an N-acyl-L-amino acid + a tRNA + H(+). Its function is as follows. Hydrolyzes ribosome-free peptidyl-tRNAs (with 1 or more amino acids incorporated), which drop off the ribosome during protein synthesis, or as a result of ribosome stalling. Catalyzes the release of premature peptidyl moieties from peptidyl-tRNA molecules trapped in stalled 50S ribosomal subunits, and thus maintains levels of free tRNAs and 50S ribosomes. This is Peptidyl-tRNA hydrolase from Ehrlichia canis (strain Jake).